The chain runs to 89 residues: LYR motif-containing protein 4 (89 aa).

A coiled-coil region spans residues lysine 44 to threonine 71.

Belongs to the complex I LYR family.

The protein localises to the mitochondrion. Its subcellular location is the nucleus. Its pathway is cofactor biosynthesis; iron-sulfur cluster biosynthesis. Its function is as follows. Required for nuclear and mitochondrial iron-sulfur protein biosynthesis. The chain is LYR motif-containing protein 4 (LYRM4) from Taeniopygia guttata (Zebra finch).